Consider the following 264-residue polypeptide: 3-deoxy-manno-octulosonate cytidylyltransferase (264 aa).

Belongs to the KdsB family.

Its subcellular location is the cytoplasm. The catalysed reaction is 3-deoxy-alpha-D-manno-oct-2-ulosonate + CTP = CMP-3-deoxy-beta-D-manno-octulosonate + diphosphate. Its pathway is nucleotide-sugar biosynthesis; CMP-3-deoxy-D-manno-octulosonate biosynthesis; CMP-3-deoxy-D-manno-octulosonate from 3-deoxy-D-manno-octulosonate and CTP: step 1/1. It functions in the pathway bacterial outer membrane biogenesis; lipopolysaccharide biosynthesis. Its function is as follows. Activates KDO (a required 8-carbon sugar) for incorporation into bacterial lipopolysaccharide in Gram-negative bacteria. This Marinomonas sp. (strain MWYL1) protein is 3-deoxy-manno-octulosonate cytidylyltransferase.